Here is a 394-residue protein sequence, read N- to C-terminus: Elongation factor Tu 2 (394 aa).

Residues 10–204 form the tr-type G domain; that stretch reads KPHVNVGTIG…YLDSYIPEPE (195 aa). Residues 19–26 form a G1 region; sequence GHVDHGKT. Position 19–26 (19–26) interacts with GTP; sequence GHVDHGKT. Position 26 (Thr-26) interacts with Mg(2+). The tract at residues 60–64 is G2; the sequence is GITIN. The segment at 81 to 84 is G3; sequence DCPG. GTP contacts are provided by residues 81-85 and 136-139; these read DCPGH and NKCD. The tract at residues 136 to 139 is G4; it reads NKCD. The G5 stretch occupies residues 174-176; that stretch reads SAL.

The protein belongs to the TRAFAC class translation factor GTPase superfamily. Classic translation factor GTPase family. EF-Tu/EF-1A subfamily. Monomer.

It is found in the cytoplasm. It catalyses the reaction GTP + H2O = GDP + phosphate + H(+). Functionally, GTP hydrolase that promotes the GTP-dependent binding of aminoacyl-tRNA to the A-site of ribosomes during protein biosynthesis. This chain is Elongation factor Tu 2, found in Serratia proteamaculans (strain 568).